The following is a 333-amino-acid chain: GDP-fucose transporter 1 (333 aa).

A run of 8 helical transmembrane segments spans residues 13-33, 45-65, 95-115, 139-159, 169-189, 211-231, 239-259, and 293-313; these read SIKIAFVVALYWVVSISMVFL, APMFVTWFQCVVAVVTCFILG, LVFVGMIAFNNLALKFVGVAF, TSMPALLMCGVIVAGFFVGVN, MAGIMYGVLASLCVALNAIYI, AIFLFLPVITFMGEIPDIAAS, YWFLMTVAGLLGIAIGLVSML, and TATWWLGNVFVLGGSLGYVLV.

It belongs to the TPT transporter family. SLC35C subfamily.

The protein resides in the golgi apparatus membrane. The catalysed reaction is GMP(out) + GDP-beta-L-fucose(in) = GMP(in) + GDP-beta-L-fucose(out). Functionally, antiporter specific for GDP-l-fucose and depending on the concomitant reverse transport of GMP. Involved in GDP-fucose import from the cytoplasm into the Golgi lumen. This is GDP-fucose transporter 1 (slc35c1) from Monosiga brevicollis (Choanoflagellate).